The following is a 1127-amino-acid chain: MSSESDDKRARTRSKTLRGPPETTGADLSCPTPGCTGSGHVRGKYSRHRSLQSCPLAKKRKLEDAETEHLVSKRKSHPLRLALDEGYRMDSDGSEDAEVKDVSVSDESEGPLEEAEAEMSGQEEIHHPQTAEGKSLIKPHFDSNPTSSPSGFSKSSYSSYQGIIATSLLNLGQIAEEALVKEDSVSVAKLSPTVVHQLQDEAAMGVNSDEGEKDLFIQPEDVEEVIEVTSERSQEPCPQSLKDMVSEESSKQKGVLGHEEEGEEEEEDEEEEDEEEEEEGEEGEEEEEEEEEEEEEEDEEEEEEEEEAAPNVIFGEDTSHTSVQKASPEFRGPELSSPKPEYSVIVEVRSDDDKDEDSRSQKSAVTDESEMYDMMTRGNLGLLEQAIALKAEQVRAVCESGCPPAEQGHLGPGEPGKMAKPLDVVRKSCYSKDPSRVEKREIKCPTPGCDGTGHVTGLYPHHRSLSGCPHKDRIPPEILAMHENVLKCPTPGCTGQGHVNSNRNTHRSLSGCPIAAAEKLAKSHEKQQLQTGDPPKNNSNSDRILRPMCFVKQLEVPPYGSYRPNVAPATPRANLAKELEKFSKVTFDYASFDAQVFGKRMLAPKIQTSETSPKAFQCFDYSHDAEAAHMAATAILNLSTRCWEMPENLSTKPQDLPSKAVDIEVDENGTLDLSMHKHRKRENTFPSSSSCSSSPGVKSPDVSQRQSSTSAPSSSMTSPQSSQASRQDEWDRPLDYTKPSRLREEEPEESEPAAHSFASSEADDQEVSEENFEERKYPGEVTLTNFKLKFLSKDIKKELLTCPTPGCDGSGHITGNYASHRSLSGCPLADKSLRNLMAAHSADLKCPTPGCDGSGHITGNYASHRSLSGCPRAKKSGLKVAPTKDDKEDPELMKCPVPGCVGLGHISGKYASHRSASGCPLAARRQKEGALNGSSFSWKSLKNEGPTCPTPGCDGSGHANGSFLTHRSLSGCPRATFAGKKGKLSGDEILSPKFKTSDVLENDEEIKQLNQEIRDLNESNSEMEAAMVQLQSQISSMEKNLKNIEEENKLIEEQNEALFLELSGLSQALIQSLANIRLPHMEPICEQNFDAYVNTLTDMYSNQDCYQNPENKGLLETIKQAVRGIQV.

Disordered stretches follow at residues 1–157 and 204–369; these read MSSE…KSSY and MGVN…TDES. The CCHHC-type 1 zinc finger occupies 21 to 64; sequence PETTGADLSCPTPGCTGSGHVRGKYSRHRSLQSCPLAKKRKLED. Zn(2+) contacts are provided by cysteine 30, cysteine 35, histidine 48, and cysteine 54. Positions 41–50 are enriched in basic residues; it reads VRGKYSRHRS. Composition is skewed to basic and acidic residues over residues 61–71 and 82–103; these read KLEDAETEHLV and ALDE…KDVS. The segment covering 104-117 has biased composition (acidic residues); the sequence is VSDESEGPLEEAEA. Residues 143 to 157 are compositionally biased toward low complexity; sequence SNPTSSPSGFSKSSY. Basic and acidic residues predominate over residues 244 to 259; it reads MVSEESSKQKGVLGHE. Positions 260-308 are enriched in acidic residues; the sequence is EEGEEEEEDEEEEDEEEEEEGEEGEEEEEEEEEEEEEEDEEEEEEEEEA. Positions 348–360 are enriched in basic and acidic residues; sequence VRSDDDKDEDSRS. 2 CCHHC-type zinc fingers span residues 435 to 478 and 479 to 522; these read SRVE…PPEI and LAMH…KLAK. Cysteine 444, cysteine 449, histidine 462, cysteine 468, cysteine 488, cysteine 493, histidine 506, and cysteine 512 together coordinate Zn(2+). Disordered regions lie at residues 520–542 and 670–776; these read LAKS…SNSD and TLDL…EERK. Positions 528–542 are enriched in polar residues; the sequence is QLQTGDPPKNNSNSD. Over residues 703 to 725 the composition is skewed to low complexity; it reads SQRQSSTSAPSSSMTSPQSSQAS. The span at 726-735 shows a compositional bias: basic and acidic residues; that stretch reads RQDEWDRPLD. Residues 761–772 are compositionally biased toward acidic residues; the sequence is EADDQEVSEENF. 4 CCHHC-type zinc fingers span residues 793-836, 837-880, 886-929, and 939-982; these read KDIK…LRNL, MAAH…GLKV, DKED…QKEG, and KSLK…GKKG. Zn(2+) contacts are provided by cysteine 802, cysteine 807, histidine 820, cysteine 826, cysteine 846, cysteine 851, histidine 864, cysteine 870, cysteine 895, cysteine 900, histidine 913, cysteine 919, cysteine 948, cysteine 953, histidine 966, and cysteine 972.

The protein belongs to the MYT1 family. In terms of assembly, interacts with STEAP3. In terms of tissue distribution, isoform 1 is more predominant than isoform 2 at all stages of development and adulthood. Expressed in differentiated neurons especially at higher levels in newly generated ones.

It is found in the nucleus. Functionally, binds to the promoter region of genes encoding proteolipid proteins of the central nervous system. May play a role in the development of neurons and oligodendroglia in the CNS. May regulate a critical transition point in oligodendrocyte lineage development by modulating oligodendrocyte progenitor proliferation relative to terminal differentiation and up-regulation of myelin gene transcription. The polypeptide is Myelin transcription factor 1 (Myt1) (Mus musculus (Mouse)).